Reading from the N-terminus, the 152-residue chain is Membrane-spanning 4-domains subfamily A member 13 (152 aa).

4 consecutive transmembrane segments (helical) span residues 1–21, 32–52, 66–86, and 111–131; these read MIGIFHIFMWYFLLVLYMGQI, TYKTGCTLWGIFFIIAGVFLI, TLIINIICIITTITAVTLTII, and ILLFFYGLEFSIALTHSIYSC.

It belongs to the MS4A family.

The protein localises to the membrane. In terms of biological role, may be involved in signal transduction as a component of a multimeric receptor complex. The sequence is that of Membrane-spanning 4-domains subfamily A member 13 (MS4A13) from Homo sapiens (Human).